A 106-amino-acid polypeptide reads, in one-letter code: UPF0145 protein CPF_0876 (106 aa).

Belongs to the UPF0145 family.

The protein is UPF0145 protein CPF_0876 of Clostridium perfringens (strain ATCC 13124 / DSM 756 / JCM 1290 / NCIMB 6125 / NCTC 8237 / Type A).